Consider the following 947-residue polypeptide: Cell adhesion molecule CEACAM5 (947 aa).

A signal peptide spans 1–34 (MEASSVLPCKWCTHLQGLLLTASFLTCCHLPTTA). Ig-like V-type domains are found at residues 35 to 132 (QITI…EIVS), 166 to 259 (SEGG…VQLY), 270 to 378 (PLQV…LHVN), 392 to 498 (RLSI…LQLD), 509 to 615 (QVKI…LHVN), 642 to 733 (GESV…VQLQ), and 746 to 851 (DQLI…VQVH). 13 N-linked (GlcNAc...) asparagine glycosylation sites follow: Asn-57, Asn-103, Asn-110, Asn-207, Asn-224, Asn-341, Asn-461, Asn-472, Asn-578, Asn-698, Asn-709, Asn-816, and Asn-823. Positions 859 to 943 (PFVRVTDTTV…SKSSLPVRLA (85 aa)) constitute an Ig-like C2-type 1 domain. A disulfide bridge connects residues Cys-878 and Cys-926.

This sequence belongs to the immunoglobulin superfamily. CEA family. Homodimer.

The protein localises to the cell membrane. Its subcellular location is the apical cell membrane. It is found in the cell surface. In terms of biological role, cell surface glycoprotein that plays a role in cell adhesion, intracellular signaling and tumor progression. Mediates homophilic and heterophilic cell adhesion with other carcinoembryonic antigen-related cell adhesion molecules, such as CEACAM6. Plays a role as an oncogene by promoting tumor progression; induces resistance to anoikis of colorectal carcinoma cells. In Mus musculus (Mouse), this protein is Cell adhesion molecule CEACAM5.